Consider the following 374-residue polypeptide: Methylthioribose-1-phosphate isomerase (374 aa).

Aspartate 256 (proton donor) is an active-site residue.

It belongs to the eIF-2B alpha/beta/delta subunits family. MtnA subfamily.

Its subcellular location is the cytoplasm. The protein resides in the nucleus. It catalyses the reaction 5-(methylsulfanyl)-alpha-D-ribose 1-phosphate = 5-(methylsulfanyl)-D-ribulose 1-phosphate. The protein operates within amino-acid biosynthesis; L-methionine biosynthesis via salvage pathway; L-methionine from S-methyl-5-thio-alpha-D-ribose 1-phosphate: step 1/6. Functionally, catalyzes the interconversion of methylthioribose-1-phosphate (MTR-1-P) into methylthioribulose-1-phosphate (MTRu-1-P). In Leishmania braziliensis, this protein is Methylthioribose-1-phosphate isomerase.